Consider the following 258-residue polypeptide: Small ribosomal subunit protein uS2 (258 aa).

A disordered region spans residues 222–258 (GKALRDQDEAEQVEPVSQEEKDEVVAEAMSEADFEEQ).

The protein belongs to the universal ribosomal protein uS2 family.

The polypeptide is Small ribosomal subunit protein uS2 (Campylobacter fetus subsp. fetus (strain 82-40)).